The chain runs to 434 residues: Serine--tRNA ligase (434 aa).

239–241 (TAE) contacts L-serine. Residue 270–272 (RSE) participates in ATP binding. An L-serine-binding site is contributed by E293. 357-360 (EISS) lines the ATP pocket. S392 is a binding site for L-serine.

It belongs to the class-II aminoacyl-tRNA synthetase family. Type-1 seryl-tRNA synthetase subfamily. As to quaternary structure, homodimer. The tRNA molecule binds across the dimer.

Its subcellular location is the cytoplasm. The enzyme catalyses tRNA(Ser) + L-serine + ATP = L-seryl-tRNA(Ser) + AMP + diphosphate + H(+). It catalyses the reaction tRNA(Sec) + L-serine + ATP = L-seryl-tRNA(Sec) + AMP + diphosphate + H(+). It functions in the pathway aminoacyl-tRNA biosynthesis; selenocysteinyl-tRNA(Sec) biosynthesis; L-seryl-tRNA(Sec) from L-serine and tRNA(Sec): step 1/1. In terms of biological role, catalyzes the attachment of serine to tRNA(Ser). Is also able to aminoacylate tRNA(Sec) with serine, to form the misacylated tRNA L-seryl-tRNA(Sec), which will be further converted into selenocysteinyl-tRNA(Sec). The protein is Serine--tRNA ligase of Cupriavidus taiwanensis (strain DSM 17343 / BCRC 17206 / CCUG 44338 / CIP 107171 / LMG 19424 / R1) (Ralstonia taiwanensis (strain LMG 19424)).